Reading from the N-terminus, the 424-residue chain is Serine--tRNA ligase (424 aa).

Position 230 to 232 (230 to 232 (TAE)) interacts with L-serine. 261–263 (RSE) is a binding site for ATP. L-serine is bound at residue Glu284. Residue 348 to 351 (EISS) participates in ATP binding. Ser384 is an L-serine binding site.

This sequence belongs to the class-II aminoacyl-tRNA synthetase family. Type-1 seryl-tRNA synthetase subfamily. In terms of assembly, homodimer. The tRNA molecule binds across the dimer.

It is found in the cytoplasm. It catalyses the reaction tRNA(Ser) + L-serine + ATP = L-seryl-tRNA(Ser) + AMP + diphosphate + H(+). The enzyme catalyses tRNA(Sec) + L-serine + ATP = L-seryl-tRNA(Sec) + AMP + diphosphate + H(+). It participates in aminoacyl-tRNA biosynthesis; selenocysteinyl-tRNA(Sec) biosynthesis; L-seryl-tRNA(Sec) from L-serine and tRNA(Sec): step 1/1. Its function is as follows. Catalyzes the attachment of serine to tRNA(Ser). Is also able to aminoacylate tRNA(Sec) with serine, to form the misacylated tRNA L-seryl-tRNA(Sec), which will be further converted into selenocysteinyl-tRNA(Sec). The chain is Serine--tRNA ligase from Desulfatibacillum aliphaticivorans.